We begin with the raw amino-acid sequence, 1496 residues long: Chromosome partition protein MukB (1496 aa).

63-70 (GGNGAGKS) is an ATP binding site. 2 coiled-coil regions span residues 328-493 (KLEL…QRLS) and 536-632 (KMQA…APAW). Residues 694-811 (PDGSDDVRLN…EVPLFGRAAR (118 aa)) are flexible hinge. Coiled-coil stretches lie at residues 861–1171 (NPEE…SAEE) and 1235–1291 (IDAI…LQNI). Over residues 1082 to 1091 (RARSRRDELQ) the composition is skewed to basic and acidic residues. The segment at 1082-1101 (RARSRRDELQQRLSQQRSRK) is disordered.

Belongs to the SMC family. MukB subfamily. Homodimerization via its hinge domain. Binds to DNA via its C-terminal region. Interacts, and probably forms a ternary complex, with MukE and MukF via its C-terminal region. The complex formation is stimulated by calcium or magnesium. Interacts with tubulin-related protein FtsZ.

The protein resides in the cytoplasm. It is found in the nucleoid. Its function is as follows. Plays a central role in chromosome condensation, segregation and cell cycle progression. Functions as a homodimer, which is essential for chromosome partition. Involved in negative DNA supercoiling in vivo, and by this means organize and compact chromosomes. May achieve or facilitate chromosome segregation by condensation DNA from both sides of a centrally located replisome during cell division. This Actinobacillus pleuropneumoniae serotype 3 (strain JL03) protein is Chromosome partition protein MukB.